A 380-amino-acid chain; its full sequence is GDP-mannose:cellobiosyl-diphosphopolyprenol alpha-mannosyltransferase (380 aa).

This sequence belongs to the glycosyltransferase group 1 family. Glycosyltransferase 4 subfamily.

The catalysed reaction is beta-D-Glc-(1-&gt;4)-alpha-D-Glc-di-trans,octa-cis-undecaprenyl diphosphate + GDP-alpha-D-mannose = alpha-D-Man-(1-&gt;3)-beta-D-Glc-(1-&gt;4)-alpha-D-Glc-1-di-trans,octa-cis-undecaprenyl diphosphate + GDP + H(+). Its function is as follows. Involved in the biosynthesis of the exopolysaccharide xanthan, a polymer that is comprised of repeating pentasaccharide units with the structure of a beta-(1,4)-linked D-glucose backbone with trisaccharide side chains composed of mannose-beta-(1,4)-glucuronic acid-beta-(1,2)-mannose attached to alternate glucose residues in the backbone by alpha-(1,3) linkages. Xanthan is involved in pathogenicity but has also been used in a variety of applications as a specialty polymer for commercial applications, including food additives, where they act as viscosifying, stabilizing, emulsifying, or gelling agents. In Xanthomonas oryzae pv. oryzae (strain PXO99A), this protein is GDP-mannose:cellobiosyl-diphosphopolyprenol alpha-mannosyltransferase (gumH).